We begin with the raw amino-acid sequence, 268 residues long: Tryptophan synthase alpha chain (268 aa).

Active-site proton acceptor residues include Glu49 and Asp60.

Belongs to the TrpA family. As to quaternary structure, tetramer of two alpha and two beta chains.

It carries out the reaction (1S,2R)-1-C-(indol-3-yl)glycerol 3-phosphate + L-serine = D-glyceraldehyde 3-phosphate + L-tryptophan + H2O. The protein operates within amino-acid biosynthesis; L-tryptophan biosynthesis; L-tryptophan from chorismate: step 5/5. Its function is as follows. The alpha subunit is responsible for the aldol cleavage of indoleglycerol phosphate to indole and glyceraldehyde 3-phosphate. The chain is Tryptophan synthase alpha chain from Escherichia coli O1:K1 / APEC.